The following is a 270-amino-acid chain: Cross-pathway control protein 1 (270 aa).

2 disordered regions span residues 114 to 135 (QAQA…QTQP) and 153 to 213 (QTVH…IIVE). Residues 184-195 (SVSPPSGRHSSV) show a composition bias toward low complexity. The region spanning 216-270 (SDVVAMKRARNTLAARKSRERKAQRLEELEAKIEELIAERDRWKNLALAHGASTE) is the bZIP domain. The tract at residues 222–240 (KRARNTLAARKSRERKAQR) is basic motif. Residues 241-248 (LEELEAKI) are leucine-zipper.

This sequence belongs to the bZIP family. GCN4 subfamily. As to quaternary structure, binds DNA as a dimer.

The protein resides in the nucleus. In N.crassa grown under amino acid starvation conditions, this protein is required for increasing the transcription of the genes coding for many amino acid biosynthetic pathways enzymes. This transcription factor binds and recognize the DNA sequence: 5'-TGACTC-3'. The sequence is that of Cross-pathway control protein 1 (cpc-1) from Neurospora crassa (strain ATCC 24698 / 74-OR23-1A / CBS 708.71 / DSM 1257 / FGSC 987).